The sequence spans 297 residues: L-threonate dehydrogenase (297 aa).

NAD(+)-binding positions include 3–31 and T97; that span reads RNIGVIGLGAMGFGVAQSLLRAGFNVHAC. K173 is a catalytic residue. Residue K241 participates in NAD(+) binding.

It belongs to the HIBADH-related family. L-threonate dehydrogenase subfamily.

The enzyme catalyses L-threonate + NAD(+) = 2-dehydro-L-erythronate + NADH + H(+). Catalyzes oxidation of L-threonate to 2-oxo-tetronate. Can use either NAD(+) or NADP(+) as cosubstrate, with a preference for NAD(+). This is L-threonate dehydrogenase from Cupriavidus necator (strain ATCC 17699 / DSM 428 / KCTC 22496 / NCIMB 10442 / H16 / Stanier 337) (Ralstonia eutropha).